The following is a 306-amino-acid chain: MELVFLGTGAGVPSRGRNVTSIALSMLNERNTIWLFDCGEATQHQIMRSQIKLSKLEKIFITHMHGDHIFGLPGLLSSRSFQGGDSNLTIYGPAGIAEYVETSLRLSGTRLTYKINFEEIEPGVIFEDKMFIVTADDLDHGVRSFGYRIVEKDKQGALNAEKLKADGVEAGPVFQKLKNGEIVTLADGRVIDGKNYIGEPQKGKIISIFGDTRETSSELELALNADILVHEATFEGDKAKMAGEYMHSTTLQAAKLAKTANVKKLILTHISSRYDRDASKELLIEAKTIFENTEIAYDLAVFQVGE.

7 residues coordinate Zn(2+): His63, His65, Asp67, His68, His140, Asp211, and His269. Catalysis depends on Asp67, which acts as the Proton acceptor.

The protein belongs to the RNase Z family. As to quaternary structure, homodimer. Zn(2+) serves as cofactor.

It catalyses the reaction Endonucleolytic cleavage of RNA, removing extra 3' nucleotides from tRNA precursor, generating 3' termini of tRNAs. A 3'-hydroxy group is left at the tRNA terminus and a 5'-phosphoryl group is left at the trailer molecule.. Zinc phosphodiesterase, which displays some tRNA 3'-processing endonuclease activity. Probably involved in tRNA maturation, by removing a 3'-trailer from precursor tRNA. In Listeria monocytogenes serovar 1/2a (strain ATCC BAA-679 / EGD-e), this protein is Ribonuclease Z.